The sequence spans 120 residues: Large ribosomal subunit protein bL20 (120 aa).

The protein belongs to the bacterial ribosomal protein bL20 family.

Binds directly to 23S ribosomal RNA and is necessary for the in vitro assembly process of the 50S ribosomal subunit. It is not involved in the protein synthesizing functions of that subunit. In Cereibacter sphaeroides (strain ATCC 17025 / ATH 2.4.3) (Rhodobacter sphaeroides), this protein is Large ribosomal subunit protein bL20.